Here is a 471-residue protein sequence, read N- to C-terminus: Anthocyanidin 3-O-glucosyltransferase (471 aa).

Histidine 24 functions as the Proton acceptor in the catalytic mechanism. Histidine 24 contributes to the an anthocyanidin binding site. Aspartate 130 functions as the Charge relay in the catalytic mechanism. Threonine 152 contributes to the UDP-alpha-D-glucose binding site. Histidine 161 is an an anthocyanidin binding site. Alanine 352, glutamine 354, histidine 369, tryptophan 372, serine 374, and glutamate 377 together coordinate UDP-alpha-D-glucose. Glycine 392 lines the an anthocyanidin pocket. UDP-alpha-D-glucose-binding residues include aspartate 393 and glutamine 394.

This sequence belongs to the UDP-glycosyltransferase family.

It carries out the reaction an anthocyanidin + UDP-alpha-D-glucose + H(+) = an anthocyanidin 3-O-beta-D-glucoside + UDP. It participates in pigment biosynthesis; anthocyanin biosynthesis. In the presence of other necessary color factors, this glycosylation reaction allows the accumulation of anthocyanin pigments. The protein is Anthocyanidin 3-O-glucosyltransferase (BZ1) of Zea mays (Maize).